Here is a 278-residue protein sequence, read N- to C-terminus: Indole-3-glycerol phosphate synthase (278 aa).

The protein belongs to the TrpC family.

It catalyses the reaction 1-(2-carboxyphenylamino)-1-deoxy-D-ribulose 5-phosphate + H(+) = (1S,2R)-1-C-(indol-3-yl)glycerol 3-phosphate + CO2 + H2O. The protein operates within amino-acid biosynthesis; L-tryptophan biosynthesis; L-tryptophan from chorismate: step 4/5. In Pseudomonas fluorescens (strain ATCC BAA-477 / NRRL B-23932 / Pf-5), this protein is Indole-3-glycerol phosphate synthase.